The following is a 131-amino-acid chain: Biogenesis of lysosome-related organelles complex 1 subunit 5 (131 aa).

Belongs to the BLOC1S5 family. As to quaternary structure, component of the biogenesis of lysosome-related organelles complex-1 (BLOC-1) composed at least of blos-1, blos-2, blos-4, dsbn-1, glo-2, mutd-1 and snpn-1.

Its function is as follows. Component of the biogenesis of lysosome-related organelles complex-1 (BLOC-1) involved in gut granule biogenesis. The sequence is that of Biogenesis of lysosome-related organelles complex 1 subunit 5 (mutd-1) from Caenorhabditis elegans.